Consider the following 590-residue polypeptide: 4-oxocyclohex-2-ene-1-carboxylate 5-dehydrogenase (590 aa).

Belongs to the FAD-dependent oxidoreductase 2 family. In terms of assembly, forms multimers. FAD is required as a cofactor.

The enzyme catalyses 4-oxocyclohex-2-ene-1-carboxylate + NAD(+) = 4-oxocyclohexa-2,5-diene-1-carboxylate + NADH + H(+). Its function is as follows. Desaturase involved in a cyclohexanecarboxylate (CHCA) degradation pathway. Probably catalyzes the conversion of 4-oxocyclohexenecarboxylate to 4-oxocyclohex-2,5-dienecarboxylate, which is spontaneously isomerized to 4-hydroxybenzoate (4-HBA). This is 4-oxocyclohex-2-ene-1-carboxylate 5-dehydrogenase from Sinomonas cyclohexanicum (Corynebacterium cyclohexanicum).